Consider the following 278-residue polypeptide: Coiled-coil domain-containing protein 106 (278 aa).

Positions 61–99 (AQLHLALERNSWLQKRIEDLEEERDFLRCQLDKFISSAR) form a coiled coil. The segment covering 102 to 119 (ADDHCRGKPGPRRAEGDG) has biased composition (basic and acidic residues). The tract at residues 102–174 (ADDHCRGKPG…KPKARERQRV (73 aa)) is disordered. Ser-128 bears the Phosphoserine mark. Residues 131–144 (ESAASSLSGASEEG) show a composition bias toward low complexity. Basic residues predominate over residues 150–166 (KRQKQKGGPGRRRFGKP). The short motif at 151 to 164 (RQKQKGGPGRRRFG) is the Bipartite nuclear localization signal element.

As to quaternary structure, interacts with p53/TP53.

Its subcellular location is the nucleus. Its function is as follows. Promotes the degradation of p53/TP53 protein and inhibits its transactivity. This Bos taurus (Bovine) protein is Coiled-coil domain-containing protein 106 (CCDC106).